Here is a 147-residue protein sequence, read N- to C-terminus: MSCGDKIRIAIVVSEFNYDVTRVMEEKAIDHARFLGAEVSLVARSPGTFDTPFIVSRLLATHSEVDAVAVLGAVIKGDTKHDEVVAHQAARKLLDLSIEYGKPVTLGIIGPGASRLEAIERAEEYARRAVESAVKLARRSKELSGEC.

Residues Phe-16, 48–50 (TFD), and 73–75 (AVI) each bind 5-amino-6-(D-ribitylamino)uracil. 78 to 79 (DT) is a (2S)-2-hydroxy-3-oxobutyl phosphate binding site. Residue His-81 is the Proton donor of the active site. Position 106 (Leu-106) interacts with 5-amino-6-(D-ribitylamino)uracil. Arg-121 contacts (2S)-2-hydroxy-3-oxobutyl phosphate.

Belongs to the DMRL synthase family.

It carries out the reaction (2S)-2-hydroxy-3-oxobutyl phosphate + 5-amino-6-(D-ribitylamino)uracil = 6,7-dimethyl-8-(1-D-ribityl)lumazine + phosphate + 2 H2O + H(+). The protein operates within cofactor biosynthesis; riboflavin biosynthesis; riboflavin from 2-hydroxy-3-oxobutyl phosphate and 5-amino-6-(D-ribitylamino)uracil: step 1/2. Functionally, catalyzes the formation of 6,7-dimethyl-8-ribityllumazine by condensation of 5-amino-6-(D-ribitylamino)uracil with 3,4-dihydroxy-2-butanone 4-phosphate. This is the penultimate step in the biosynthesis of riboflavin. The polypeptide is 6,7-dimethyl-8-ribityllumazine synthase (Aeropyrum pernix (strain ATCC 700893 / DSM 11879 / JCM 9820 / NBRC 100138 / K1)).